Reading from the N-terminus, the 224-residue chain is Response regulator protein GraR (224 aa).

Residues 2–115 (QILLVEDDNT…VLIAKLQAIY (114 aa)) enclose the Response regulatory domain. A 4-aspartylphosphate modification is found at D51. Residues 126–224 (KRTLTWQDAV…KVGKGYMAHE (99 aa)) constitute a DNA-binding region (ompR/PhoB-type). A phosphothreonine mark is found at T128, T130, and T149.

As to quaternary structure, interacts with GraX. Post-translationally, phosphorylated by GraS. Phosphorylated by Stk1; phosphorylation increases the DNA-binding activity of GraR.

Its subcellular location is the cytoplasm. In terms of biological role, member of the two-component regulatory system GraR/GraS involved in resistance against cationic antimicrobial peptides (CAMPs). Upon phosphorylation by GraS, functions as a transcription regulator by direct binding to promoter regions of target genes such as adhesins, exoproteins, transporters, toxins, and proteins involved in cell wall synthesis. Down-regulates the expression of many genes involved in RNA and amino acid synthesis or glycolysis. This Staphylococcus aureus (strain Mu3 / ATCC 700698) protein is Response regulator protein GraR (graR).